Consider the following 1399-residue polypeptide: DNA-directed RNA polymerase subunit beta' (1399 aa).

Positions 70, 72, 85, and 88 each coordinate Zn(2+). Residues aspartate 460, aspartate 462, and aspartate 464 each contribute to the Mg(2+) site. Cysteine 814, cysteine 888, cysteine 895, and cysteine 898 together coordinate Zn(2+).

Belongs to the RNA polymerase beta' chain family. The RNAP catalytic core consists of 2 alpha, 1 beta, 1 beta' and 1 omega subunit. When a sigma factor is associated with the core the holoenzyme is formed, which can initiate transcription. Requires Mg(2+) as cofactor. The cofactor is Zn(2+).

The catalysed reaction is RNA(n) + a ribonucleoside 5'-triphosphate = RNA(n+1) + diphosphate. DNA-dependent RNA polymerase catalyzes the transcription of DNA into RNA using the four ribonucleoside triphosphates as substrates. The sequence is that of DNA-directed RNA polymerase subunit beta' from Pseudomonas putida (strain ATCC 700007 / DSM 6899 / JCM 31910 / BCRC 17059 / LMG 24140 / F1).